Consider the following 175-residue polypeptide: ATP-dependent protease subunit HslV (175 aa).

Threonine 2 is a catalytic residue. Glycine 158, cysteine 161, and threonine 164 together coordinate Na(+).

The protein belongs to the peptidase T1B family. HslV subfamily. In terms of assembly, a double ring-shaped homohexamer of HslV is capped on each side by a ring-shaped HslU homohexamer. The assembly of the HslU/HslV complex is dependent on binding of ATP.

The protein resides in the cytoplasm. It carries out the reaction ATP-dependent cleavage of peptide bonds with broad specificity.. Its activity is regulated as follows. Allosterically activated by HslU binding. Protease subunit of a proteasome-like degradation complex believed to be a general protein degrading machinery. In Haemophilus influenzae (strain 86-028NP), this protein is ATP-dependent protease subunit HslV.